Here is a 151-residue protein sequence, read N- to C-terminus: UPF0208 membrane protein YfbV (151 aa).

Helical transmembrane passes span 46 to 65 (FGIRFMPPLAIFTLTWQIAL) and 69 to 91 (LGPAVATALFACSLPMQGLWWLG).

It belongs to the UPF0208 family.

The protein localises to the cell inner membrane. This chain is UPF0208 membrane protein YfbV (yfbV), found in Photorhabdus temperata.